A 710-amino-acid chain; its full sequence is Interleukin-1 receptor-associated kinase 1 (710 aa).

Residues 27 to 106 (MCRFYKVMDA…DIITAWHPPA (80 aa)) form the Death domain. A Phosphothreonine; by PKC/PRKCI modification is found at Thr66. The disordered stretch occupies residues 107 to 133 (PVVPPSTAAPRPSSISAGSEAGDWSPR). Residues 110–211 (PPSTAAPRPS…FCEISQGTCN (102 aa)) form a proST region region. The segment covering 111–123 (PSTAAPRPSSISA) has biased composition (low complexity). Ser131 is subject to Phosphoserine. Residues Lys134 and Lys180 each participate in a glycyl lysine isopeptide (Lys-Gly) (interchain with G-Cter in ubiquitin) cross-link. Residues 169 to 190 (PPLPSSAPSSTKSSPESPVSGL) are disordered. A compositionally biased stretch (low complexity) spans 174 to 188 (SAPSSTKSSPESPVS). Thr209 carries the post-translational modification Phosphothreonine; by IRAK4. Residues 212–521 (FSEELRIGEG…TQVYKRLEGL (310 aa)) enclose the Protein kinase domain. ATP-binding positions include 218–226 (IGEGGFGCV) and Lys239. Asp340 serves as the catalytic Proton acceptor. ATP-binding positions include 342–345 (KSSN) and Asp358. The residue at position 375 (Ser375) is a Phosphoserine. Thr387 carries the phosphothreonine modification. Disordered stretches follow at residues 527-655 (WELE…SEPP) and 689-710 (FPGL…EFQS). Residues 537–553 (PSPQENSYMSTTGSAQS) show a composition bias toward polar residues. At Ser553 the chain carries Phosphoserine. Over residues 567–576 (APAQAAQQLQ) the composition is skewed to low complexity. Positions 616-639 (SCTQGGTTRESSVRSSPGFQPTTM) are enriched in polar residues. Low complexity predominate over residues 640 to 654 (EGSPTGSSSLLSSEP).

Belongs to the protein kinase superfamily. TKL Ser/Thr protein kinase family. Pelle subfamily. In terms of assembly, homodimer. Forms a complex with TRAF6, PELI1, IRAK4 and MYD88. Direct binding of SMAD6 to PELI1 prevents complex formation and hence negatively regulates IL1R-TLR signaling and eventually NF-kappa-B-mediated gene expression. The TRAF6-PELI1-IRAK4-MYD88 complex recruits MAP3K7/TAK1, TAB1 and TAB2 to mediate NF-kappa-B activation. Interaction with MYD88 recruits IRAK1 to the stimulated receptor complex. Interacts with TOLLIP; this interaction occurs in the cytosol prior to receptor activation. Interacts with IL1RL1. Interacts (when polyubiquitinated) with IKBKG/NEMO. Interacts with RSAD2/viperin. Interacts with IRAK1BP1. Interacts with PELI2. Interacts with ZC3H12A; this interaction increases the interaction between ZC3H12A and IKBKB/IKKB. Interacts with IRAK4. Interacts with PELI3. Interacts with PELI1 and TRAF6. Interacts with INAVA; the interaction takes place upon PRR stimulation. Interacts (via C-terminus) with NFATC4 (via N-terminus). Requires Mg(2+) as cofactor. Following recruitment on the activated receptor complex, phosphorylated on Thr-209, probably by IRAK4, resulting in a conformational change of the kinase domain, allowing further phosphorylations to take place. Thr-387 phosphorylation in the activation loop is required to achieve full enzymatic activity. Post-translationally, polyubiquitinated by TRAF6 after cell stimulation with IL-1-beta by PELI1, PELI2 and PELI3. Polyubiquitination occurs with polyubiquitin chains linked through 'Lys-63'. Ubiquitination promotes interaction with NEMO/IKBKG. Also sumoylated; leading to nuclear translocation. As to expression, highly expressed in liver, followed by kidney and skeletal muscle.

Its subcellular location is the cytoplasm. The protein resides in the nucleus. It is found in the lipid droplet. The catalysed reaction is L-seryl-[protein] + ATP = O-phospho-L-seryl-[protein] + ADP + H(+). It carries out the reaction L-threonyl-[protein] + ATP = O-phospho-L-threonyl-[protein] + ADP + H(+). Its function is as follows. Serine/threonine-protein kinase that plays a critical role in initiating innate immune response against foreign pathogens. Involved in Toll-like receptor (TLR) and IL-1R signaling pathways. Is rapidly recruited by MYD88 to the receptor-signaling complex upon TLR activation. Association with MYD88 leads to IRAK1 phosphorylation by IRAK4 and subsequent autophosphorylation and kinase activation. Phosphorylates E3 ubiquitin ligases Pellino proteins (PELI1, PELI2 and PELI3) to promote pellino-mediated polyubiquitination of IRAK1. Then, the ubiquitin-binding domain of IKBKG/NEMO binds to polyubiquitinated IRAK1 bringing together the IRAK1-MAP3K7/TAK1-TRAF6 complex and the NEMO-IKKA-IKKB complex. In turn, MAP3K7/TAK1 activates IKKs (CHUK/IKKA and IKBKB/IKKB) leading to NF-kappa-B nuclear translocation and activation. Alternatively, phosphorylates TIRAP to promote its ubiquitination and subsequent degradation. Phosphorylates the interferon regulatory factor 7 (IRF7) to induce its activation and translocation to the nucleus, resulting in transcriptional activation of type I IFN genes, which drive the cell in an antiviral state. When sumoylated, translocates to the nucleus and phosphorylates STAT3. In Mus musculus (Mouse), this protein is Interleukin-1 receptor-associated kinase 1 (Irak1).